The sequence spans 353 residues: Protein RecA (353 aa).

75–82 (GPESSGKT) provides a ligand contact to ATP.

Belongs to the RecA family.

Its subcellular location is the cytoplasm. Its function is as follows. Can catalyze the hydrolysis of ATP in the presence of single-stranded DNA, the ATP-dependent uptake of single-stranded DNA by duplex DNA, and the ATP-dependent hybridization of homologous single-stranded DNAs. It interacts with LexA causing its activation and leading to its autocatalytic cleavage. In Cupriavidus necator (Alcaligenes eutrophus), this protein is Protein RecA.